The following is a 364-amino-acid chain: Dihydroorotate dehydrogenase (quinone) (364 aa).

FMN-binding positions include 62–66 (AGFDK) and Thr86. Substrate is bound at residue Lys66. 111 to 115 (NRMGF) provides a ligand contact to substrate. FMN is bound by residues Asn142 and Asn175. Asn175 contacts substrate. The Nucleophile role is filled by Ser178. Asn180 lines the substrate pocket. The FMN site is built by Lys216 and Thr244. Position 245–246 (245–246 (NT)) interacts with substrate. Residues Gly267, Gly296, and 317-318 (YT) each bind FMN.

Belongs to the dihydroorotate dehydrogenase family. Type 2 subfamily. Monomer. It depends on FMN as a cofactor.

It localises to the cell membrane. The enzyme catalyses (S)-dihydroorotate + a quinone = orotate + a quinol. It participates in pyrimidine metabolism; UMP biosynthesis via de novo pathway; orotate from (S)-dihydroorotate (quinone route): step 1/1. Functionally, catalyzes the conversion of dihydroorotate to orotate with quinone as electron acceptor. The protein is Dihydroorotate dehydrogenase (quinone) of Anaeromyxobacter dehalogenans (strain 2CP-C).